Consider the following 246-residue polypeptide: Protein DEHYDRATION-INDUCED 19 homolog 3 (246 aa).

The disordered stretch occupies residues 185 to 230 (ERSKAPVPIPDDTSIHKDTPAQPWESRIDSSLTSEEREQKRKQATD). Basic and acidic residues predominate over residues 218 to 229 (SEEREQKRKQAT).

Belongs to the Di19 family.

In Oryza sativa subsp. japonica (Rice), this protein is Protein DEHYDRATION-INDUCED 19 homolog 3 (DI19-3).